A 1905-amino-acid chain; its full sequence is Alpha-2-macroglobulin (1905 aa).

The N-terminal stretch at 1–21 is a signal peptide; sequence MNKQYFLSLFSTLAVALTLSG. Residue Cys-22 is the site of N-palmitoyl cysteine attachment. The S-diacylglycerol cysteine moiety is linked to residue Cys-22. Residues 1438–1441 constitute a cross-link (isoglutamyl cysteine thioester (Cys-Gln)); the sequence is CTEQ.

Belongs to the protease inhibitor I39 (alpha-2-macroglobulin) family. Bacterial alpha-2-macroglobulin subfamily.

It is found in the cell membrane. Protects the bacterial cell from host peptidases. In Pasteurella multocida (strain Pm70), this protein is Alpha-2-macroglobulin.